A 208-amino-acid chain; its full sequence is Interleukin-6 (208 aa).

Residues 1–29 form the signal peptide; that stretch reads MNSLFTSAFSPLAVSLGLLLVMTSAFPTP. N-linked (GlcNAc...) asparagine glycosylation is present at N38. Cysteines 72 and 78 form a disulfide. S81 is modified (phosphoserine). A disulfide bond links C101 and C111.

It belongs to the IL-6 superfamily. Component of a hexamer of two molecules each of IL6, IL6R and IL6ST; first binds to IL6R to associate with the signaling subunit IL6ST. Interacts with IL6R (via the N-terminal ectodomain); this interaction may be affected by IL6R-binding with SORL1, hence decreasing IL6 cis signaling. Interacts with SORL1 (via the N-terminal ectodomain); this interaction leads to IL6 internalization and lysosomal degradation. May form a trimeric complex with the soluble SORL1 ectodomain and soluble IL6R receptor; this interaction might stabilize circulating IL6, hence promoting IL6 trans signaling.

It localises to the secreted. Cytokine with a wide variety of biological functions in immunity, tissue regeneration, and metabolism. Binds to IL6R, then the complex associates to the signaling subunit IL6ST/gp130 to trigger the intracellular IL6-signaling pathway. The interaction with the membrane-bound IL6R and IL6ST stimulates 'classic signaling', whereas the binding of IL6 and soluble IL6R to IL6ST stimulates 'trans-signaling'. Alternatively, 'cluster signaling' occurs when membrane-bound IL6:IL6R complexes on transmitter cells activate IL6ST receptors on neighboring receiver cells. Its function is as follows. IL6 is a potent inducer of the acute phase response. Rapid production of IL6 contributes to host defense during infection and tissue injury, but excessive IL6 synthesis is involved in disease pathology. In the innate immune response, is synthesized by myeloid cells, such as macrophages and dendritic cells, upon recognition of pathogens through toll-like receptors (TLRs) at the site of infection or tissue injury. In the adaptive immune response, is required for the differentiation of B cells into immunoglobulin-secreting cells. Plays a major role in the differentiation of CD4(+) T cell subsets. Essential factor for the development of T follicular helper (Tfh) cells that are required for the induction of germinal-center formation. Required to drive naive CD4(+) T cells to the Th17 lineage. Also required for proliferation of myeloma cells and the survival of plasmablast cells. Functionally, acts as an essential factor in bone homeostasis and on vessels directly or indirectly by induction of VEGF, resulting in increased angiogenesis activity and vascular permeability. Induces, through 'trans-signaling' and synergistically with IL1B and TNF, the production of VEGF. Involved in metabolic controls, is discharged into the bloodstream after muscle contraction increasing lipolysis and improving insulin resistance. 'Trans-signaling' in central nervous system also regulates energy and glucose homeostasis. Mediates, through GLP-1, crosstalk between insulin-sensitive tissues, intestinal L cells and pancreatic islets to adapt to changes in insulin demand. Also acts as a myokine. Plays a protective role during liver injury, being required for maintenance of tissue regeneration. Also has a pivotal role in iron metabolism by regulating HAMP/hepcidin expression upon inflammation or bacterial infection. Through activation of IL6ST-YAP-NOTCH pathway, induces inflammation-induced epithelial regeneration. In Capra hircus (Goat), this protein is Interleukin-6 (IL6).